The sequence spans 277 residues: Large ribosomal subunit protein uL2 (277 aa).

Residues 219 to 277 form a disordered region; that stretch reads TVRGSVMNPNDHPHGGGEGKAPVGRKAPSTPWGKPALGLKTRNKKAKSNKLIVRRRNEK. Residues 259 to 277 are compositionally biased toward basic residues; the sequence is TRNKKAKSNKLIVRRRNEK.

The protein belongs to the universal ribosomal protein uL2 family. As to quaternary structure, part of the 50S ribosomal subunit. Forms a bridge to the 30S subunit in the 70S ribosome.

Its function is as follows. One of the primary rRNA binding proteins. Required for association of the 30S and 50S subunits to form the 70S ribosome, for tRNA binding and peptide bond formation. It has been suggested to have peptidyltransferase activity; this is somewhat controversial. Makes several contacts with the 16S rRNA in the 70S ribosome. The polypeptide is Large ribosomal subunit protein uL2 (Streptococcus equi subsp. zooepidemicus (strain MGCS10565)).